The chain runs to 265 residues: Ribosomal RNA small subunit methyltransferase G (265 aa).

S-adenosyl-L-methionine-binding residues include G75, L80, and R145. Residues 212 to 265 (RAVRSSQRTRAESRGGRGDGERHDGRQVRRTSRDSLRSREVGRDQPTRGQSRST) form a disordered region. A compositionally biased stretch (basic and acidic residues) spans 220 to 257 (TRAESRGGRGDGERHDGRQVRRTSRDSLRSREVGRDQP).

Belongs to the methyltransferase superfamily. RNA methyltransferase RsmG family.

It localises to the cytoplasm. Its function is as follows. Specifically methylates the N7 position of guanine in position 518 of 16S rRNA. This is Ribosomal RNA small subunit methyltransferase G from Frankia casuarinae (strain DSM 45818 / CECT 9043 / HFP020203 / CcI3).